A 463-amino-acid chain; its full sequence is L-seryl-tRNA(Sec) selenium transferase (463 aa).

Lysine 295 is subject to N6-(pyridoxal phosphate)lysine.

It belongs to the SelA family. Homodecamer; pentamer of dimers. Binds only one seryl-tRNA(Sec) per dimer. The cofactor is pyridoxal 5'-phosphate.

It is found in the cytoplasm. The catalysed reaction is L-seryl-tRNA(Sec) + selenophosphate + H(+) = L-selenocysteinyl-tRNA(Sec) + phosphate. It participates in aminoacyl-tRNA biosynthesis; selenocysteinyl-tRNA(Sec) biosynthesis; selenocysteinyl-tRNA(Sec) from L-seryl-tRNA(Sec) (bacterial route): step 1/1. Functionally, converts seryl-tRNA(Sec) to selenocysteinyl-tRNA(Sec) required for selenoprotein biosynthesis. The polypeptide is L-seryl-tRNA(Sec) selenium transferase (Shigella boydii serotype 4 (strain Sb227)).